The primary structure comprises 581 residues: Spastin (581 aa).

Positions 1 to 12 (MSSPAGRRKKKG) are enriched in basic residues. A disordered region spans residues 1 to 39 (MSSPAGRRKKKGSGGASPAPARPPPPAAVPAPAAGPAPA). Residues 1-48 (MSSPAGRRKKKGSGGASPAPARPPPPAAVPAPAAGPAPAPGSPHKRNL) form a required for nuclear localization region. The Cytoplasmic segment spans residues 1 to 54 (MSSPAGRRKKKGSGGASPAPARPPPPAAVPAPAAGPAPAPGSPHKRNLYYFSYP). The required for interaction with ATL1 stretch occupies residues 1 to 78 (MSSPAGRRKK…LGLLFVWLCQ (78 aa)). Residues 1 to 191 (MSSPAGRRKK…LVMAKDRLQL (191 aa)) are required for midbody localization. The interval 1-265 (MSSPAGRRKK…GTSKPNRTNK (265 aa)) is required for interaction with RTN1. The Nuclear localization signal motif lies at 4–11 (PAGRRKKK). Positions 20–39 (PARPPPPAAVPAPAAGPAPA) are enriched in pro residues. The required for interaction with SSNA1 and microtubules stretch occupies residues 48–85 (LYYFSYPLVVGFALLRLLACHLGLLFVWLCQRFSRALM). An intramembrane region (helical) is located at residues 55–75 (LVVGFALLRLLACHLGLLFVW). Positions 57-65 (VGFALLRLL) match the Nuclear export signal motif. At 76–581 (LCQRFSRALM…WNKDFGDTTV (506 aa)) the chain is on the cytoplasmic side. The tract at residues 90–111 (SSGTAPAPASPSTPAPGPGGEA) is disordered. Residues 97-106 (PASPSTPAPG) are compositionally biased toward pro residues. The region spanning 118–192 (HKQAFEYISI…VMAKDRLQLL (75 aa)) is the MIT domain. Positions 193–581 (ESGAVPKKKD…WNKDFGDTTV (389 aa)) are sufficient for microtubule severing. Positions 195–277 (GAVPKKKDPL…TPTTAVRKKK (83 aa)) are disordered. Over residues 206 to 225 (HASNSLPRSKTVMKSGSTGL) the composition is skewed to polar residues. S210 and S233 each carry phosphoserine. Residues 235-293 (SGLSMVSGARPGSGPAATTHKGTSKPNRTNKPSTPTTAVRKKKDLKNFRNVDSNLANLI) are required for interaction with microtubules and microtubule severing. The span at 254–271 (HKGTSKPNRTNKPSTPTT) shows a compositional bias: polar residues. T271 is subject to Phosphothreonine. The Nuclear localization signal signature appears at 274–277 (RKKK). Residue 347–354 (GPPGNGKT) coordinates ATP. S562 bears the Phosphoserine mark.

It belongs to the AAA ATPase family. Spastin subfamily. In terms of assembly, homohexamer. Mostly monomeric, but assembles into hexameric structure for short periods of time. Oligomerization seems to be a prerequisite for catalytic activity. Binding to ATP in a cleft between two adjacent subunits stabilizes the homohexameric form. Binds to microtubules at least in part via the alpha-tubulin and beta-tubulin tails. The hexamer adopts a ring conformation through which microtubules pass prior to being severed. Does not interact strongly with tubulin heterodimers. Interacts (via MIT domain) with CHMP1B; the interaction is direct. Interacts with SSNA1. Interacts with ATL1. Interacts with RTN1. Interacts with ZFYVE27. Interacts with REEP1. Interacts (via MIT domain) with IST1.

The protein localises to the membrane. It localises to the endoplasmic reticulum. The protein resides in the midbody. Its subcellular location is the cytoplasm. It is found in the cytoskeleton. The protein localises to the microtubule organizing center. It localises to the centrosome. The protein resides in the perinuclear region. Its subcellular location is the nucleus. It is found in the spindle. The protein localises to the cell projection. It localises to the axon. The enzyme catalyses n ATP + n H2O + a microtubule = n ADP + n phosphate + (n+1) alpha/beta tubulin heterodimers.. With respect to regulation, allosteric enzyme with a cooperative mechanism; at least two neighbor subunits influence each other strongly in spastin hexamers. Microtubule binding promotes cooperative interactions among spastin subunits. Functionally, ATP-dependent microtubule severing protein that specifically recognizes and cuts microtubules that are polyglutamylated. Preferentially recognizes and acts on microtubules decorated with short polyglutamate tails: severing activity increases as the number of glutamates per tubulin rises from one to eight, but decreases beyond this glutamylation threshold. Severing activity is not dependent on tubulin acetylation or detyrosination. Microtubule severing promotes reorganization of cellular microtubule arrays and the release of microtubules from the centrosome following nucleation. It is critical for the biogenesis and maintenance of complex microtubule arrays in axons, spindles and cilia. SPAST is involved in abscission step of cytokinesis and nuclear envelope reassembly during anaphase in cooperation with the ESCRT-III complex. Recruited at the midbody, probably by IST1, and participates in membrane fission during abscission together with the ESCRT-III complex. Recruited to the nuclear membrane by IST1 and mediates microtubule severing, promoting nuclear envelope sealing and mitotic spindle disassembly during late anaphase. Required for membrane traffic from the endoplasmic reticulum (ER) to the Golgi and endosome recycling. Recruited by IST1 to endosomes and regulates early endosomal tubulation and recycling by mediating microtubule severing. Probably plays a role in axon growth and the formation of axonal branches. This Rattus norvegicus (Rat) protein is Spastin.